A 203-amino-acid chain; its full sequence is Guanylate kinase (203 aa).

Residues 3 to 181 enclose the Guanylate kinase-like domain; that stretch reads GTLYVVSAPS…TLADLQAIFT (179 aa). Residue 10 to 17 participates in ATP binding; that stretch reads APSGAGKT.

This sequence belongs to the guanylate kinase family.

Its subcellular location is the cytoplasm. It catalyses the reaction GMP + ATP = GDP + ADP. In terms of biological role, essential for recycling GMP and indirectly, cGMP. This Alkalilimnicola ehrlichii (strain ATCC BAA-1101 / DSM 17681 / MLHE-1) protein is Guanylate kinase.